Reading from the N-terminus, the 242-residue chain is Beta-glucanase (242 aa).

A signal peptide spans M1 to A28. Q29 carries the pyrrolidone carboxylic acid modification. One can recognise a GH16 domain in the interval Q29–K242. Cysteines 60 and 89 form a disulfide. Catalysis depends on E133, which acts as the Nucleophile. The active-site Proton donor is the E137.

It belongs to the glycosyl hydrolase 16 family.

The protein localises to the secreted. It catalyses the reaction Hydrolysis of (1-&gt;4)-beta-D-glucosidic linkages in beta-D-glucans containing (1-&gt;3)- and (1-&gt;4)-bonds.. The chain is Beta-glucanase (bglS) from Bacillus subtilis (strain 168).